The primary structure comprises 299 residues: Regucalcin (299 aa).

Glu18 is a binding site for a divalent metal cation. Substrate contacts are provided by Arg101, Asn103, and Glu121. At Lys144 the chain carries N6-succinyllysine. Positions 154 and 204 each coordinate a divalent metal cation. The Proton donor/acceptor role is filled by Asp204. N6-succinyllysine is present on residues Lys244 and Lys253.

This sequence belongs to the SMP-30/CGR1 family. As to quaternary structure, monomer. Zn(2+) is required as a cofactor. It depends on Mn(2+) as a cofactor. The cofactor is Ca(2+). Requires Mg(2+) as cofactor. Mainly present in the liver. Weak expression was found in the brain, lung and kidney.

It is found in the cytoplasm. The catalysed reaction is D-glucono-1,5-lactone + H2O = D-gluconate + H(+). Its pathway is cofactor biosynthesis; L-ascorbate biosynthesis via UDP-alpha-D-glucuronate pathway; L-ascorbate from UDP-alpha-D-glucuronate: step 3/4. In terms of biological role, gluconolactonase with low activity towards other sugar lactones, including gulonolactone and galactonolactone. Catalyzes a key step in ascorbic acid (vitamin C) biosynthesis. Can also hydrolyze diisopropyl phosphorofluoridate and phenylacetate (in vitro). Calcium-binding protein. Modulates Ca(2+) signaling, and Ca(2+)-dependent cellular processes and enzyme activities. The sequence is that of Regucalcin (Rgn) from Mus musculus (Mouse).